Reading from the N-terminus, the 538-residue chain is MRHVQAEPSPSSEPEAGPSQPPVRQGALQGGLLMGYSPAGGATSPGVYQVSIFSPPAGTSEPHRALKRQAPSTEGPRELKRGPGLGAREGLPPEEPSTVGLLGPEGPGLGLGVASQHFSHRGLCVVEQRSSVTSSWTSGAWSPPCPPSNASCNTLHTRDWASPDPGGQGSLGESPGPAPPGQLHTLDTDLHSLAQIGGKSPVAGVGNGGSLWPRESPGTANGHSPEHTPPGPGPPGPCPTKRRLLPAGEAPDVSSEEEGPAPRRRRGSLGHPTAANSSDAKATPFWSHLLPGPKEPVLDPTDCGPMGRRLKGARRLKLSPLRSLRKGPGLLSPPSASPVPTPAVSRTLLGNFEESLLRGRFAPSGHIEGFTAEIGASGSYCPQHVTLPVTVTFFDVSEQNAPAPFLGIVDLNPLGRKGYSVPKVGTVQVTLFNPNQTVVKMFLVTFDFSDMPAAHMTFLRHRLFLVPVGEEGNANPTHRLLCYLLHLRFRSSRSGRLSLHGDIRLLFSRRSLELDTGLPYELQAVTEAPHNPRYSPLP.

Over residues M1–P18 the composition is skewed to low complexity. Disordered stretches follow at residues M1 to A114 and T133 to P300. Over residues H227–C238 the composition is skewed to pro residues. Phosphoserine is present on residues S254 and S255. Residues L348 to T430 are required for macropage invasion. The transactivation domain 1 (TAD1) stretch occupies residues Q436 to V444.

Belongs to the ATOS family.

The protein resides in the nucleus. Transcription regulator that may syncronize transcriptional and translational programs. The chain is Atos homolog protein B from Homo sapiens (Human).